Here is a 228-residue protein sequence, read N- to C-terminus: Elongation factor 1-beta 1 (228 aa).

Ala-2 carries the N-acetylalanine modification. Residues 14–65 form the GST C-terminal domain; that stretch reads LKTLEEHLAGKTYISGDQLSVDDVKVYAAVLENPGDGFPNASKWYDSVASHL. The tract at residues 75 to 139 is disordered; it reads GVRVGGGVAP…DTKKTKESGK (65 aa). Residues 95-115 show a composition bias toward acidic residues; the sequence is PAADGDGDDDDDIDLFADETE. The span at 116–138 shows a compositional bias: basic and acidic residues; that stretch reads DEKKAAEEREAAKKDTKKTKESG.

This sequence belongs to the EF-1-beta/EF-1-delta family. EF-1 is composed of 4 subunits: alpha, beta (1B-alpha=beta'), delta (1B-beta), and gamma (1B-gamma).

The protein resides in the cell membrane. EF-1-beta and EF-1-delta stimulate the exchange of GDP bound to EF-1-alpha to GTP. This Arabidopsis thaliana (Mouse-ear cress) protein is Elongation factor 1-beta 1.